The chain runs to 472 residues: Carboxypeptidase Q (472 aa).

An N-terminal signal peptide occupies residues 1–20 (MKFLIFAFFGGVHLLSLCSG). Positions 21 to 44 (KAICKNGISKRTFEEIKEEIASCG) are excised as a propeptide. Residues N61 and N179 are each glycosylated (N-linked (GlcNAc...) asparagine). Residues H290 and D302 each contribute to the Zn(2+) site. Catalysis depends on E336, which acts as the Nucleophile. E337 contacts Zn(2+). 2 N-linked (GlcNAc...) asparagine glycosylation sites follow: N353 and N356. Residue D364 coordinates Zn(2+). N396 is a glycosylation site (N-linked (GlcNAc...) asparagine). Residue H434 participates in Zn(2+) binding.

This sequence belongs to the peptidase M28 family. In terms of assembly, homodimer. The monomeric form is inactive while the homodimer is active. N-glycosylated. The secreted form is modified by hybrid or complex type oligosaccharide chains. As to expression, mainly detected in blood plasma. Abundant in placenta and kidney. Present at low level in muscles, liver and skin fibroblasts. Not detected in brain or white blood cells (at protein level).

The protein localises to the endoplasmic reticulum. It localises to the golgi apparatus. It is found in the lysosome. The protein resides in the secreted. Carboxypeptidase that may play an important role in the hydrolysis of circulating peptides. Catalyzes the hydrolysis of dipeptides with unsubstituted terminals into amino acids. May play a role in the liberation of thyroxine hormone from its thyroglobulin (Tg) precursor. This is Carboxypeptidase Q (CPQ) from Homo sapiens (Human).